The primary structure comprises 100 residues: Mitochondrial import inner membrane translocase subunit Tim10 B (100 aa).

Residues cysteine 25–cysteine 49 carry the Twin CX3C motif motif. Disulfide bonds link cysteine 25-cysteine 49 and cysteine 29-cysteine 45.

It belongs to the small Tim family. As to quaternary structure, component of the TIM22 complex, which core is composed of TIMM22, associated with TIMM10 (TIMM10A and/or TIMM10B), TIMM9, AGK and TIMM29.

It is found in the mitochondrion inner membrane. Its function is as follows. Component of the TIM22 complex, a complex that mediates the import and insertion of multi-pass transmembrane proteins into the mitochondrial inner membrane. The TIM22 complex forms a twin-pore translocase that uses the membrane potential as the external driving force. In the TIM22 complex, it may act as a docking point for the soluble 70 kDa complex that guides the target proteins in transit through the aqueous mitochondrial intermembrane space. This chain is Mitochondrial import inner membrane translocase subunit Tim10 B (Timm10b), found in Mus musculus (Mouse).